Here is a 253-residue protein sequence, read N- to C-terminus: Histone-arginine methyltransferase METTL23 (253 aa).

The segment at M1–T23 is disordered.

Belongs to the methyltransferase superfamily. METTL23 family. Interacts with HSPA5, HSP90B1, TUBULIN, UGGT1 and UGGT2. Interacts with TET3. Interacts with STPG4. As to expression, ubiquitously expressed.

The protein resides in the nucleus. It is found in the cytoplasm. The catalysed reaction is L-arginyl-[protein] + 2 S-adenosyl-L-methionine = N(omega),N(omega)-dimethyl-L-arginyl-[protein] + 2 S-adenosyl-L-homocysteine + 2 H(+). In terms of biological role, histone methyltransferase that dimethylates histone H3 at 'Arg-17', forming asymmetric dimethylarginine (H3R17me2a), leading to activate transcription via chromatin remodeling. Maternal factor involved in epigenetic chromatin reprogramming of the paternal genome in the zygote: mediates H3R17me2a, promoting histone H3.3 incorporation in the male pronucleus, leading to TET3 recruitment and subsequent DNA demethylation. This is Histone-arginine methyltransferase METTL23 from Mus musculus (Mouse).